A 1888-amino-acid polypeptide reads, in one-letter code: E3 ubiquitin-protein ligase UPL3 (1888 aa).

Basic and acidic residues predominate over residues Met1–Glu10. Residues Met1–Ser157 are disordered. The span at Leu41 to Ser81 shows a compositional bias: low complexity. Residues Asn97–Leu124 are compositionally biased toward basic and acidic residues. Residues Asp137–Asp146 show a composition bias toward acidic residues. ARM repeat units follow at residues Glu227 to Asp267, Pro270 to Gln310, His312 to Lys349, and Leu351 to Glu390. 4 disordered regions span residues Lys660–Asn711, Ala970–Cys1119, Asp1134–Ala1157, and Arg1280–Gln1307. Residues Pro986 to Thr1002 show a composition bias toward low complexity. The span at Thr1019–Gly1029 shows a compositional bias: basic and acidic residues. A compositionally biased stretch (acidic residues) spans Ser1076–Asp1113. Composition is skewed to low complexity over residues Ala1148–Ala1157 and Ala1286–Ser1303. A K-box region spans residues Ala1377–Gly1451. Residues Met1490–Ser1888 form the HECT domain. The Glycyl thioester intermediate role is filled by Cys1855.

Belongs to the UPL family. K-HECT subfamily. In terms of tissue distribution, widely expressed.

The catalysed reaction is S-ubiquitinyl-[E2 ubiquitin-conjugating enzyme]-L-cysteine + [acceptor protein]-L-lysine = [E2 ubiquitin-conjugating enzyme]-L-cysteine + N(6)-ubiquitinyl-[acceptor protein]-L-lysine.. It participates in protein modification; protein ubiquitination. Its function is as follows. Probable E3 ubiquitin-protein ligase which mediates ubiquitination and subsequent proteasomal degradation of target proteins. Involved in the repression of endoreduplication process and the cell morphogenesis in the trichomes. This Arabidopsis thaliana (Mouse-ear cress) protein is E3 ubiquitin-protein ligase UPL3 (UPL3).